The following is a 100-amino-acid chain: Urease subunit gamma (100 aa).

This sequence belongs to the urease gamma subunit family. Heterotrimer of UreA (gamma), UreB (beta) and UreC (alpha) subunits. Three heterotrimers associate to form the active enzyme.

Its subcellular location is the cytoplasm. It carries out the reaction urea + 2 H2O + H(+) = hydrogencarbonate + 2 NH4(+). The protein operates within nitrogen metabolism; urea degradation; CO(2) and NH(3) from urea (urease route): step 1/1. The protein is Urease subunit gamma of Mycobacterium bovis (strain ATCC BAA-935 / AF2122/97).